Consider the following 512-residue polypeptide: GTPase Obg (512 aa).

An Obg domain is found at 2–159; the sequence is ATFVDTVTLH…GDVVLELKVV (158 aa). Residues 160-336 enclose the OBG-type G domain; sequence ADVALVGYPS…LSFALAELVE (177 aa). GTP contacts are provided by residues 166 to 173, 191 to 195, 212 to 215, 288 to 291, and 317 to 319; these read GYPSAGKS, FTTLH, DVPG, NKID, and STV. Positions 173 and 193 each coordinate Mg(2+). Positions 355-439 constitute an OCT domain; that stretch reads PRAVNEKPFT…GDGIVFDWEP (85 aa). The tract at residues 491 to 512 is disordered; sequence GEAGLWADEDGTDEDASSDAKA. A compositionally biased stretch (acidic residues) spans 497 to 512; it reads ADEDGTDEDASSDAKA.

It belongs to the TRAFAC class OBG-HflX-like GTPase superfamily. OBG GTPase family. As to quaternary structure, monomer. The cofactor is Mg(2+).

The protein resides in the cytoplasm. An essential GTPase which binds GTP, GDP and possibly (p)ppGpp with moderate affinity, with high nucleotide exchange rates and a fairly low GTP hydrolysis rate. Plays a role in control of the cell cycle, stress response, ribosome biogenesis and in those bacteria that undergo differentiation, in morphogenesis control. This Clavibacter michiganensis subsp. michiganensis (strain NCPPB 382) protein is GTPase Obg.